The chain runs to 475 residues: BICD family-like cargo adapter 2 (475 aa).

Residues 56 to 275 (ELGKALLERN…LKELQDELHM (220 aa)) are a coiled coil. Composition is skewed to polar residues over residues 286 to 300 (HSSL…TAVQ) and 308 to 318 (SAETQSITSGY). The disordered stretch occupies residues 286-318 (HSSLHSEIQQSTAVQNHEKGRNSAETQSITSGY). Positions 340–413 (RLQDQVTMQH…ESLNLQLLST (74 aa)) form a coiled coil. Residues 440–450 (QSQKQQETQKP) are compositionally biased toward low complexity. A disordered region spans residues 440-459 (QSQKQQETQKPPESPQNSFL).

It belongs to the BICDR family.

The sequence is that of BICD family-like cargo adapter 2 (bicdl2) from Xenopus tropicalis (Western clawed frog).